A 131-amino-acid polypeptide reads, in one-letter code: ER membrane protein complex subunit 5 (131 aa).

Topologically, residues 1–3 (MAP) are cytoplasmic. A helical membrane pass occupies residues 4–22 (SLWKGLVGIGLFALAHAAF). The Lumenal segment spans residues 23–43 (SAAQHRSYMRLTEKEDESLPI). A helical transmembrane segment spans residues 44 to 63 (DIVLQTLLAFAVTCYGIVHI). Residues 64–131 (AGEFKDMDAT…KLRKLESLRR (68 aa)) are Cytoplasmic-facing. A Phosphoserine modification is found at S120.

Belongs to the membrane magnesium transporter (TC 1.A.67) family. In terms of assembly, component of the ER membrane protein complex (EMC).

Its subcellular location is the endoplasmic reticulum membrane. It is found in the golgi apparatus membrane. It localises to the early endosome membrane. Functionally, part of the endoplasmic reticulum membrane protein complex (EMC) that enables the energy-independent insertion into endoplasmic reticulum membranes of newly synthesized membrane proteins. Preferentially accommodates proteins with transmembrane domains that are weakly hydrophobic or contain destabilizing features such as charged and aromatic residues. Involved in the cotranslational insertion of multi-pass membrane proteins in which stop-transfer membrane-anchor sequences become ER membrane spanning helices. It is also required for the post-translational insertion of tail-anchored/TA proteins in endoplasmic reticulum membranes. By mediating the proper cotranslational insertion of N-terminal transmembrane domains in an N-exo topology, with translocated N-terminus in the lumen of the ER, controls the topology of multi-pass membrane proteins like the G protein-coupled receptors. By regulating the insertion of various proteins in membranes, it is indirectly involved in many cellular processes. May be involved in Mg(2+) transport. This Homo sapiens (Human) protein is ER membrane protein complex subunit 5.